The following is a 299-amino-acid chain: HTH-type transcriptional regulator ArgP (299 aa).

The region spanning 4–60 is the HTH lysR-type domain; the sequence is PDYRALQALDAVIRERGFERAAQKLCITQSAVSQRIKQLENLFGQPLLVRTVPPQPT. Residues 21–40 constitute a DNA-binding region (H-T-H motif); that stretch reads FERAAQKLCITQSAVSQRIK.

The protein belongs to the LysR transcriptional regulatory family. As to quaternary structure, homodimer.

Controls the transcription of genes involved in arginine and lysine metabolism. This is HTH-type transcriptional regulator ArgP from Proteus mirabilis (strain HI4320).